Here is a 90-residue protein sequence, read N- to C-terminus: MALNLEKKQEIIKAFATKANDTGSCEVQVALLNERIKLLTEHLKTNPKDHSSRLGLLKLVAQRRNLLKYIKRTDHVRYVVLIEKLGIKDR.

The protein belongs to the universal ribosomal protein uS15 family. Part of the 30S ribosomal subunit. Forms a bridge to the 50S subunit in the 70S ribosome, contacting the 23S rRNA.

Its function is as follows. One of the primary rRNA binding proteins, it binds directly to 16S rRNA where it helps nucleate assembly of the platform of the 30S subunit by binding and bridging several RNA helices of the 16S rRNA. Forms an intersubunit bridge (bridge B4) with the 23S rRNA of the 50S subunit in the ribosome. The sequence is that of Small ribosomal subunit protein uS15 from Helicobacter pylori (strain J99 / ATCC 700824) (Campylobacter pylori J99).